Reading from the N-terminus, the 127-residue chain is Large ribosomal subunit protein uL24B (127 aa).

Belongs to the universal ribosomal protein uL24 family. Component of the large ribosomal subunit (LSU). Mature yeast ribosomes consist of a small (40S) and a large (60S) subunit. The 40S small subunit contains 1 molecule of ribosomal RNA (18S rRNA) and 33 different proteins (encoded by 57 genes). The large 60S subunit contains 3 rRNA molecules (25S, 5.8S and 5S rRNA) and 46 different proteins (encoded by 81 genes).

It localises to the cytoplasm. Component of the ribosome, a large ribonucleoprotein complex responsible for the synthesis of proteins in the cell. The small ribosomal subunit (SSU) binds messenger RNAs (mRNAs) and translates the encoded message by selecting cognate aminoacyl-transfer RNA (tRNA) molecules. The large subunit (LSU) contains the ribosomal catalytic site termed the peptidyl transferase center (PTC), which catalyzes the formation of peptide bonds, thereby polymerizing the amino acids delivered by tRNAs into a polypeptide chain. The nascent polypeptides leave the ribosome through a tunnel in the LSU and interact with protein factors that function in enzymatic processing, targeting, and the membrane insertion of nascent chains at the exit of the ribosomal tunnel. This Saccharomyces cerevisiae (strain ATCC 204508 / S288c) (Baker's yeast) protein is Large ribosomal subunit protein uL24B.